The chain runs to 118 residues: U-scoloptoxin(05)-Cw1a (118 aa).

A signal peptide spans 1-22 (MNPLNLSTFIVFTLFAASATTA).

The protein belongs to the scoloptoxin-05 family. Contains 5 disulfide bonds. As to expression, expressed by the venom gland.

It is found in the secreted. This is U-scoloptoxin(05)-Cw1a from Cormocephalus westwoodi (Westwood's green centipede).